The chain runs to 325 residues: MKTFSSFLQIGRNMHQGNQTTITEFILLGFFKQDEHQNLLFVLFLGMYLVTVIGNGLIIVAISLDTYLHTPMYLFLANLSFADISSISNSVPKMLVNIQTKSQSISYESCITQMYFSIVFVVIDNLLLGTMAYDHFVAICHPLNYTILMRPRFGILLTVISWFLSNIIALTHTLLLIQLLFCNHNTLPHFFCDLAPLLKLSCSDTLINELVLFIVGLSVIIFPFTLSFFSYVCIIRAVLRVSSTQGKWKAFSTCGSHLTVVLLFYGTIVGVYFFPSSTHPEDTDKIGAVLFTVVTPMINPFIYSLRNKDMKGALRKLINRKISSL.

Topologically, residues 1 to 38 are extracellular; it reads MKTFSSFLQIGRNMHQGNQTTITEFILLGFFKQDEHQN. A glycan (N-linked (GlcNAc...) asparagine) is linked at N18. The helical transmembrane segment at 39-62 threads the bilayer; sequence LLFVLFLGMYLVTVIGNGLIIVAI. The Cytoplasmic portion of the chain corresponds to 63-70; that stretch reads SLDTYLHT. Residues 71–92 form a helical membrane-spanning segment; the sequence is PMYLFLANLSFADISSISNSVP. The Extracellular segment spans residues 93–113; sequence KMLVNIQTKSQSISYESCITQ. A disulfide bridge links C110 with C202. A helical membrane pass occupies residues 114 to 133; the sequence is MYFSIVFVVIDNLLLGTMAY. The Cytoplasmic portion of the chain corresponds to 134-152; that stretch reads DHFVAICHPLNYTILMRPR. The helical transmembrane segment at 153–171 threads the bilayer; the sequence is FGILLTVISWFLSNIIALT. At 172–208 the chain is on the extracellular side; it reads HTLLLIQLLFCNHNTLPHFFCDLAPLLKLSCSDTLIN. The helical transmembrane segment at 209-232 threads the bilayer; the sequence is ELVLFIVGLSVIIFPFTLSFFSYV. At 233 to 249 the chain is on the cytoplasmic side; it reads CIIRAVLRVSSTQGKWK. Residues 250-272 form a helical membrane-spanning segment; sequence AFSTCGSHLTVVLLFYGTIVGVY. Topologically, residues 273–285 are extracellular; the sequence is FFPSSTHPEDTDK. The chain crosses the membrane as a helical span at residues 286-305; it reads IGAVLFTVVTPMINPFIYSL. The Cytoplasmic portion of the chain corresponds to 306–325; it reads RNKDMKGALRKLINRKISSL.

It belongs to the G-protein coupled receptor 1 family.

Its subcellular location is the cell membrane. Its function is as follows. Odorant receptor. This Homo sapiens (Human) protein is Olfactory receptor 1S1 (OR1S1).